The chain runs to 323 residues: Quinolinate synthase (323 aa).

Positions 37 and 54 each coordinate iminosuccinate. Cys99 contacts [4Fe-4S] cluster. Iminosuccinate is bound by residues 125–127 and Ser142; that span reads YIN. A [4Fe-4S] cluster-binding site is contributed by Cys185. Iminosuccinate contacts are provided by residues 211–213 and Thr228; that span reads HPE. [4Fe-4S] cluster is bound at residue Cys278.

It belongs to the quinolinate synthase family. Type 2 subfamily. Requires [4Fe-4S] cluster as cofactor.

It is found in the cytoplasm. The catalysed reaction is iminosuccinate + dihydroxyacetone phosphate = quinolinate + phosphate + 2 H2O + H(+). It participates in cofactor biosynthesis; NAD(+) biosynthesis; quinolinate from iminoaspartate: step 1/1. In terms of biological role, catalyzes the condensation of iminoaspartate with dihydroxyacetone phosphate to form quinolinate. This is Quinolinate synthase from Trichodesmium erythraeum (strain IMS101).